The sequence spans 363 residues: Dihydroorotate dehydrogenase (quinone) (363 aa).

FMN-binding positions include 70-74 (AGFDK) and T94. K74 contacts substrate. 119-123 (NRMGF) is a substrate binding site. Residues N147 and N180 each coordinate FMN. Residue N180 participates in substrate binding. Residue S183 is the Nucleophile of the active site. N185 serves as a coordination point for substrate. 2 residues coordinate FMN: K216 and T244. 245-246 (NT) serves as a coordination point for substrate. FMN contacts are provided by residues G270, G299, and 320–321 (YT).

It belongs to the dihydroorotate dehydrogenase family. Type 2 subfamily. Monomer. Requires FMN as cofactor.

It localises to the cell membrane. The catalysed reaction is (S)-dihydroorotate + a quinone = orotate + a quinol. It participates in pyrimidine metabolism; UMP biosynthesis via de novo pathway; orotate from (S)-dihydroorotate (quinone route): step 1/1. Its function is as follows. Catalyzes the conversion of dihydroorotate to orotate with quinone as electron acceptor. This is Dihydroorotate dehydrogenase (quinone) from Corynebacterium diphtheriae (strain ATCC 700971 / NCTC 13129 / Biotype gravis).